We begin with the raw amino-acid sequence, 462 residues long: Kinetochore protein nsk1 (462 aa).

Polar residues predominate over residues 104 to 120 (PSKNHETSLSPSKSTID). Disordered regions lie at residues 104 to 161 (PSKN…CPGI), 180 to 240 (EKYG…PLRT), and 320 to 462 (NQLF…NIQS). Residues 121–138 (NNERKLDNEIDNYKHDVK) are compositionally biased toward basic and acidic residues. Polar residues predominate over residues 146–156 (GKTSNPSQGTT). Basic and acidic residues predominate over residues 180–189 (EKYGKTDLGK). Polar residues predominate over residues 229-240 (KNRSSTFSPLRT). Residues 324–333 (KSEEEKDPVG) show a composition bias toward basic and acidic residues. The segment covering 422–444 (WPQNLAKNNINSEPNTPTKSNID) has biased composition (polar residues). Residues 449–462 (HSARAHKTRKNIQS) are compositionally biased toward basic residues.

As to quaternary structure, interacts with dlc1. The dlc1-nsk1 complex seems to oligomerize in chain-like structures. Also binds directly to spindle microtubules. Post-translationally, phosphorylated by cdk1 at prometaphase arrest. Phosphorylation prevents nsk1 kinetochore and spindle targeting. Dephosphorylated by clp1 at anaphase onset controls its relocalization.

Its subcellular location is the nucleus. The protein resides in the nucleolus. It localises to the cytoplasm. The protein localises to the cytoskeleton. It is found in the spindle. Its subcellular location is the chromosome. The protein resides in the centromere. It localises to the kinetochore. In terms of biological role, ensures chromosome alignment and accurate chromosome segregation during mitosis. Promotes proper kinetochore-microtubule (k-MT) interactions during anaphase B. The phosphorylation status of nsk1 affects the proper k-MT coupling, ensuring that it interacts stably only at the correct time during mitosis. In Schizosaccharomyces pombe (strain 972 / ATCC 24843) (Fission yeast), this protein is Kinetochore protein nsk1 (nsk1).